Here is a 305-residue protein sequence, read N- to C-terminus: Aquaporin-1 (305 aa).

The segment at 1–34 (MSSNDSNDTDKQHTRLDPTGVDDAYIPPEQPETK) is disordered. Over 1–48 (MSSNDSNDTDKQHTRLDPTGVDDAYIPPEQPETKHHRFKISRDTLRDH) the chain is Cytoplasmic. The helical transmembrane segment at 49–69 (FIAAVGEFCGTFMFLWCAYVI) threads the bilayer. Over 70–91 (CNVANHDVALVAAPDGSHPGQL) the chain is Extracellular. Residues 92-112 (IMIAIGFGFSVMFSIWCFAGV) form a helical membrane-spanning segment. The Cytoplasmic portion of the chain corresponds to 113-136 (SGGALNPAMSLSLCLARAVSPTRC). Residues 118-120 (NPA) carry the NPA 1 motif. Residues 137-157 (VVMWVSQIVAGMAAGGAASAM) form a helical membrane-spanning segment. The Extracellular portion of the chain corresponds to 158–176 (TPGEVLFANSLGLGCSRTR). A helical transmembrane segment spans residues 177-197 (GLFLEMFGTAILCLTVLMTAV). The Cytoplasmic portion of the chain corresponds to 198–203 (EKRETN). Residues 204-224 (FMAALPIGISLFIAHVALTAY) traverse the membrane as a helical segment. Topologically, residues 225-248 (TGTGVNPARSLGAAVAARYFPHYH) are extracellular. The short motif at 230 to 232 (NPA) is the NPA 2 element. Residues 249–269 (WIYWIGTLLGSILAWSVWQLL) traverse the membrane as a helical segment. Residues 270 to 305 (QILDYTTYVTAEKAASTKEKAQKKGETSSSSAVAEV) are Cytoplasmic-facing. Residues 286–295 (TKEKAQKKGE) are compositionally biased toward basic and acidic residues. Residues 286–305 (TKEKAQKKGETSSSSAVAEV) form a disordered region. The span at 296–305 (TSSSSAVAEV) shows a compositional bias: polar residues.

The protein belongs to the MIP/aquaporin (TC 1.A.8) family.

It localises to the endoplasmic reticulum membrane. The protein localises to the cell membrane. In terms of biological role, water channel required to facilitate the transport of water across membranes. Involved in sporulation, freeze tolerance and osmotolerance. Is non-functional in most laboratory strains. The sequence is that of Aquaporin-1 (AQY1) from Saccharomyces cerevisiae (strain ATCC 204508 / S288c) (Baker's yeast).